The primary structure comprises 358 residues: Mitogen-activated protein kinase 1 (358 aa).

N-acetylalanine is present on Ala2. The 289-residue stretch at 23–311 (YTNLSYIGEG…VEQALAHPYL (289 aa)) folds into the Protein kinase domain. A Phosphoserine; by SGK1 modification is found at Ser27. ATP is bound by residues 29-37 (IGEGAYGMV) and Lys52. Asp147 serves as the catalytic Proton acceptor. At Thr183 the chain carries Phosphothreonine; by MAP2K1 and MAP2K2. The short motif at 183–185 (TEY) is the TXY element. Phosphotyrosine; by MAP2K1 and MAP2K2 is present on Tyr185. A Phosphothreonine; by autocatalysis modification is found at Thr188. Phosphoserine occurs at positions 244, 246, and 282.

This sequence belongs to the protein kinase superfamily. CMGC Ser/Thr protein kinase family. MAP kinase subfamily. As to quaternary structure, binds both upstream activators and downstream substrates in multimolecular complexes. This interaction inhibits its tyrosine-kinase activity. Interacts with ADAM15, ARHGEF2, ARRB2, DAPK1 (via death domain), HSF4, IER3, IPO7, NISCH, SGK1, and isoform 1 of NEK2. Interacts (via phosphorylated form) with TPR (via C-terminal region and phosphorylated form); the interaction requires dimerization of MAPK1/ERK2 and increases following EGF stimulation. Interacts with MAP2K1. Interacts with DUSP6. Interacts (phosphorylated form) with CAV2 ('Tyr-19'-phosphorylated form); the interaction, promoted by insulin, leads to nuclear location and MAPK1 activation. Interacts with DCC. Interacts with MORG1. Interacts with PEA15. Interacts with MKNK2. MKNK2 isoform 1 binding prevents from dephosphorylation and inactivation. The phosphorylated form interacts with PML. Interacts with STYX. Interacts with CDK2AP2. Interacts with CAVIN4. Interacts with DUSP7; the interaction enhances DUSP7 phosphatase activity. Interacts with GIT1; this interaction is necessary for MAPK1 localization to focal adhesions. Interacts with ZNF263. Interacts with phosphoglycerate kinase PGK1; the interaction is direct, occurs under hypoxic conditions, and promotes interaction between PGK1 and PIN1. It depends on Mg(2+) as a cofactor. In terms of processing, dually phosphorylated on Thr-183 and Tyr-185, which activates the enzyme. Ligand-activated ALK induces tyrosine phosphorylation. Dephosphorylated by PTPRJ at Tyr-185. Phosphorylated upon FLT3 and KIT signaling. Dephosphorylated by DUSP1 and DUSP2 at Thr-183 and Tyr-185. Post-translationally, ISGylated. Ubiquitinated by TRIM15 via 'Lys-63'-linked ubiquitination; leading to activation. Deubiquitinated by CYLD. As to expression, widely expressed.

It localises to the cytoplasm. The protein localises to the cytoskeleton. Its subcellular location is the spindle. It is found in the nucleus. The protein resides in the microtubule organizing center. It localises to the centrosome. The protein localises to the membrane. Its subcellular location is the caveola. It is found in the cell junction. The protein resides in the focal adhesion. It carries out the reaction L-seryl-[protein] + ATP = O-phospho-L-seryl-[protein] + ADP + H(+). The enzyme catalyses L-threonyl-[protein] + ATP = O-phospho-L-threonyl-[protein] + ADP + H(+). With respect to regulation, phosphorylated by MAP2K1/MEK1 and MAP2K2/MEK2 on Thr-183 and Tyr-185 in response to external stimuli like insulin or NGF. Both phosphorylations are required for activity. This phosphorylation causes dramatic conformational changes, which enable full activation and interaction of MAPK1/ERK2 with its substrates. Phosphorylation on Ser-27 by SGK1 results in its activation by enhancing its interaction with MAP2K1/MEK1 and MAP2K2/MEK2. Dephosphorylated and inactivated by DUSP1, DUSP3, DUSP6 and DUSP9. Inactivated by pyrimidylpyrrole inhibitors. Its function is as follows. Serine/threonine kinase which acts as an essential component of the MAP kinase signal transduction pathway. MAPK1/ERK2 and MAPK3/ERK1 are the 2 MAPKs which play an important role in the MAPK/ERK cascade. They participate also in a signaling cascade initiated by activated KIT and KITLG/SCF. Depending on the cellular context, the MAPK/ERK cascade mediates diverse biological functions such as cell growth, adhesion, survival and differentiation through the regulation of transcription, translation, cytoskeletal rearrangements. The MAPK/ERK cascade also plays a role in initiation and regulation of meiosis, mitosis, and postmitotic functions in differentiated cells by phosphorylating a number of transcription factors. About 160 substrates have already been discovered for ERKs. Many of these substrates are localized in the nucleus, and seem to participate in the regulation of transcription upon stimulation. However, other substrates are found in the cytosol as well as in other cellular organelles, and those are responsible for processes such as translation, mitosis and apoptosis. Moreover, the MAPK/ERK cascade is also involved in the regulation of the endosomal dynamics, including lysosome processing and endosome cycling through the perinuclear recycling compartment (PNRC); as well as in the fragmentation of the Golgi apparatus during mitosis. The substrates include transcription factors (such as ATF2, BCL6, ELK1, ERF, FOS, HSF4 or SPZ1), cytoskeletal elements (such as CANX, CTTN, GJA1, MAP2, MAPT, PXN, SORBS3 or STMN1), regulators of apoptosis (such as BAD, BTG2, CASP9, DAPK1, IER3, MCL1 or PPARG), regulators of translation (such as EIF4EBP1 and FXR1) and a variety of other signaling-related molecules (like ARHGEF2, DCC, FRS2 or GRB10). Protein kinases (such as RAF1, RPS6KA1/RSK1, RPS6KA3/RSK2, RPS6KA2/RSK3, RPS6KA6/RSK4, SYK, MKNK1/MNK1, MKNK2/MNK2, RPS6KA5/MSK1, RPS6KA4/MSK2, MAPKAPK3 or MAPKAPK5) and phosphatases (such as DUSP1, DUSP4, DUSP6 or DUSP16) are other substrates which enable the propagation the MAPK/ERK signal to additional cytosolic and nuclear targets, thereby extending the specificity of the cascade. Mediates phosphorylation of TPR in response to EGF stimulation. May play a role in the spindle assembly checkpoint. Phosphorylates PML and promotes its interaction with PIN1, leading to PML degradation. Phosphorylates CDK2AP2. Phosphorylates phosphoglycerate kinase PGK1 under hypoxic conditions to promote its targeting to the mitochondrion and suppress the formation of acetyl-coenzyme A from pyruvate. In terms of biological role, acts as a transcriptional repressor. Binds to a [GC]AAA[GC] consensus sequence. Repress the expression of interferon gamma-induced genes. Seems to bind to the promoter of CCL5, DMP1, IFIH1, IFITM1, IRF7, IRF9, LAMP3, OAS1, OAS2, OAS3 and STAT1. Transcriptional activity is independent of kinase activity. This is Mitogen-activated protein kinase 1 from Mus musculus (Mouse).